The primary structure comprises 365 residues: Cobalt-precorrin-5B C(1)-methyltransferase (365 aa).

This sequence belongs to the CbiD family.

The catalysed reaction is Co-precorrin-5B + S-adenosyl-L-methionine = Co-precorrin-6A + S-adenosyl-L-homocysteine. It functions in the pathway cofactor biosynthesis; adenosylcobalamin biosynthesis; cob(II)yrinate a,c-diamide from sirohydrochlorin (anaerobic route): step 6/10. Its function is as follows. Catalyzes the methylation of C-1 in cobalt-precorrin-5B to form cobalt-precorrin-6A. The chain is Cobalt-precorrin-5B C(1)-methyltransferase from Variovorax paradoxus (strain S110).